The following is a 657-amino-acid chain: Penicillin-binding protein activator LpoA (657 aa).

A signal peptide spans 1–25 (MLSSTFVRSKAGLVPVILAALILAA). C26 is lipidated: N-palmitoyl cysteine. C26 is lipidated: S-diacylglycerol cysteine.

It belongs to the LpoA family. Interacts with PBP1a.

It is found in the cell outer membrane. Its function is as follows. Regulator of peptidoglycan synthesis that is essential for the function of penicillin-binding protein 1A (PBP1a). The protein is Penicillin-binding protein activator LpoA of Yersinia pseudotuberculosis serotype O:1b (strain IP 31758).